The chain runs to 304 residues: uncharacterized protein (304 aa).

It belongs to the histone deacetylase family.

Putative deacetylase. This is an uncharacterized protein from Synechocystis sp. (strain ATCC 27184 / PCC 6803 / Kazusa).